Reading from the N-terminus, the 78-residue chain is MSDIADRVKKIVVEHLGVEAEKVTENANFIDDLGADSLDTVELVMAFEEEFNVEIPDDAAETIQTVGDAIKFLEKNSG.

Residues S2–S77 enclose the Carrier domain. Residue S37 is modified to O-(pantetheine 4'-phosphoryl)serine.

The protein belongs to the acyl carrier protein (ACP) family. 4'-phosphopantetheine is transferred from CoA to a specific serine of apo-ACP by AcpS. This modification is essential for activity because fatty acids are bound in thioester linkage to the sulfhydryl of the prosthetic group.

It localises to the cytoplasm. It functions in the pathway lipid metabolism; fatty acid biosynthesis. Functionally, carrier of the growing fatty acid chain in fatty acid biosynthesis. In Methylobacterium sp. (strain 4-46), this protein is Acyl carrier protein.